The following is a 908-amino-acid chain: SKI/DACH domain-containing protein 1 (908 aa).

The span at 337–353 (HHHHHHHHHHHHHHHRA) shows a compositional bias: basic residues. The tract at residues 337-461 (HHHHHHHHHH…SSSGSSQVSV (125 aa)) is disordered. Low complexity-rich tracts occupy residues 370 to 389 (PHLG…SSYS) and 396 to 410 (SDFG…NSVS). Acidic residues predominate over residues 411 to 429 (SEEEEEEGEEEEEEEEEEG). The span at 449–461 (ESDSSSGSSQVSV) shows a compositional bias: low complexity. Lys688 participates in a covalent cross-link: Glycyl lysine isopeptide (Lys-Gly) (interchain with G-Cter in SUMO2). Disordered stretches follow at residues 744–763 (ETPS…TLGS) and 792–818 (LQTP…TNEG). Positions 746–761 (PSLNPLAQSQGLSCTL) are enriched in polar residues.

This sequence belongs to the DACH/dachshund family.

The chain is SKI/DACH domain-containing protein 1 (SKIDA1) from Homo sapiens (Human).